A 782-amino-acid polypeptide reads, in one-letter code: Endonuclease MutS2 (782 aa).

Position 336–343 (336–343) interacts with ATP; it reads GPNTGGKT. In terms of domain architecture, Smr spans 707 to 782; sequence LDLRGYRYEE…GFGVTVAELK (76 aa).

This sequence belongs to the DNA mismatch repair MutS family. MutS2 subfamily. Homodimer. Binds to stalled ribosomes, contacting rRNA.

Endonuclease that is involved in the suppression of homologous recombination and thus may have a key role in the control of bacterial genetic diversity. Its function is as follows. Acts as a ribosome collision sensor, splitting the ribosome into its 2 subunits. Detects stalled/collided 70S ribosomes which it binds and splits by an ATP-hydrolysis driven conformational change. Acts upstream of the ribosome quality control system (RQC), a ribosome-associated complex that mediates the extraction of incompletely synthesized nascent chains from stalled ribosomes and their subsequent degradation. Probably generates substrates for RQC. The protein is Endonuclease MutS2 of Staphylococcus carnosus (strain TM300).